The sequence spans 236 residues: UPF0257 lipoprotein YnfC (236 aa).

The first 16 residues, 1-16, serve as a signal peptide directing secretion; that stretch reads MKYKLLPCLLAILLTG. Cysteine 17 carries N-palmitoyl cysteine lipidation. Residue cysteine 17 is the site of S-diacylglycerol cysteine attachment.

This sequence belongs to the UPF0257 family.

The protein localises to the cell membrane. This Escherichia coli O127:H6 (strain E2348/69 / EPEC) protein is UPF0257 lipoprotein YnfC.